The chain runs to 648 residues: Phosphomethylpyrimidine synthase (648 aa).

Substrate is bound by residues Asn-253, Met-282, Tyr-311, His-347, 367–369, 408–411, and Glu-447; these read SRG and DGLR. His-451 contacts Zn(2+). Residue Tyr-474 participates in substrate binding. His-515 lines the Zn(2+) pocket. 3 residues coordinate [4Fe-4S] cluster: Cys-595, Cys-598, and Cys-603.

It belongs to the ThiC family. In terms of assembly, homodimer. It depends on [4Fe-4S] cluster as a cofactor.

The catalysed reaction is 5-amino-1-(5-phospho-beta-D-ribosyl)imidazole + S-adenosyl-L-methionine = 4-amino-2-methyl-5-(phosphooxymethyl)pyrimidine + CO + 5'-deoxyadenosine + formate + L-methionine + 3 H(+). It functions in the pathway cofactor biosynthesis; thiamine diphosphate biosynthesis. Its function is as follows. Catalyzes the synthesis of the hydroxymethylpyrimidine phosphate (HMP-P) moiety of thiamine from aminoimidazole ribotide (AIR) in a radical S-adenosyl-L-methionine (SAM)-dependent reaction. This Burkholderia thailandensis (strain ATCC 700388 / DSM 13276 / CCUG 48851 / CIP 106301 / E264) protein is Phosphomethylpyrimidine synthase.